The sequence spans 675 residues: Potassium-transporting ATPase ATP-binding subunit (675 aa).

A run of 4 helical transmembrane segments spans residues 38–58, 67–87, 216–236, and 253–273; these read VMFVVYLGTALTAYLTVANLV, LAITLLLLLTVLFANFAEGMA, IALSILLSGLTLIFLLAVVTL, and IALLVCLIPTTIGGLLPAIGI. Asp304 functions as the 4-aspartylphosphate intermediate in the catalytic mechanism. ATP-binding positions include Asp341, Glu345, 371-378, and Lys389; that span reads FTAQTRMS. Mg(2+) contacts are provided by Asp512 and Asp516. Helical transmembrane passes span 582 to 602, 610 to 630, and 654 to 674; these read FAILPALFVTAYPQLGVLNVM, AVLSAVIFNALIIPVLIPLAL, and GGILVPFIAIKLIDLLIGGLM.

Belongs to the cation transport ATPase (P-type) (TC 3.A.3) family. Type IA subfamily. As to quaternary structure, the system is composed of three essential subunits: KdpA, KdpB and KdpC.

Its subcellular location is the cell membrane. It carries out the reaction K(+)(out) + ATP + H2O = K(+)(in) + ADP + phosphate + H(+). Functionally, part of the high-affinity ATP-driven potassium transport (or Kdp) system, which catalyzes the hydrolysis of ATP coupled with the electrogenic transport of potassium into the cytoplasm. This subunit is responsible for energy coupling to the transport system and for the release of the potassium ions to the cytoplasm. The protein is Potassium-transporting ATPase ATP-binding subunit of Deinococcus radiodurans (strain ATCC 13939 / DSM 20539 / JCM 16871 / CCUG 27074 / LMG 4051 / NBRC 15346 / NCIMB 9279 / VKM B-1422 / R1).